Consider the following 435-residue polypeptide: 3-phosphoshikimate 1-carboxyvinyltransferase (435 aa).

The 3-phosphoshikimate site is built by lysine 22, serine 23, and arginine 27. Phosphoenolpyruvate is bound at residue lysine 22. The phosphoenolpyruvate site is built by glycine 94 and arginine 122. 3-phosphoshikimate-binding residues include serine 166, glutamine 168, aspartate 314, and lysine 341. Glutamine 168 lines the phosphoenolpyruvate pocket. Catalysis depends on aspartate 314, which acts as the Proton acceptor. Phosphoenolpyruvate is bound by residues arginine 345 and arginine 388.

Belongs to the EPSP synthase family. In terms of assembly, monomer.

Its subcellular location is the cytoplasm. The catalysed reaction is 3-phosphoshikimate + phosphoenolpyruvate = 5-O-(1-carboxyvinyl)-3-phosphoshikimate + phosphate. It participates in metabolic intermediate biosynthesis; chorismate biosynthesis; chorismate from D-erythrose 4-phosphate and phosphoenolpyruvate: step 6/7. Its function is as follows. Catalyzes the transfer of the enolpyruvyl moiety of phosphoenolpyruvate (PEP) to the 5-hydroxyl of shikimate-3-phosphate (S3P) to produce enolpyruvyl shikimate-3-phosphate and inorganic phosphate. The chain is 3-phosphoshikimate 1-carboxyvinyltransferase from Ruthia magnifica subsp. Calyptogena magnifica.